A 238-amino-acid chain; its full sequence is Ribosomal RNA small subunit methyltransferase G (238 aa).

Residues G99, L104, 122 to 124 (DAT), 150 to 151 (VE), and R164 each bind S-adenosyl-L-methionine.

The protein belongs to the methyltransferase superfamily. RNA methyltransferase RsmG family.

The protein resides in the cytoplasm. Functionally, specifically methylates the N7 position of a guanine in 16S rRNA. This is Ribosomal RNA small subunit methyltransferase G from Chlorobium luteolum (strain DSM 273 / BCRC 81028 / 2530) (Pelodictyon luteolum).